The sequence spans 1048 residues: 3-hydroxy-3-methylglutaryl-coenzyme A reductase (1048 aa).

Residues 1–32 (MDPVVKKPSPGGVQHRVTKGLRAIVGHACRHP) are Cytoplasmic-facing. A helical membrane pass occupies residues 33-53 (IHTLLVTALTAATTHLHVLEG). Over 54–220 (TYQAAHRGLA…FLHRVKHAET (167 aa)) the chain is Lumenal. A helical transmembrane segment spans residues 221–241 (VDLVIIGLSYLAMNMTVVSLF). The 182-residue stretch at 222-403 (DLVIIGLSYL…FTFYATILCV (182 aa)) folds into the SSD domain. The Cytoplasmic segment spans residues 242–250 (RVMRQLGSR). A helical transmembrane segment spans residues 251-271 (FWLATSVLLSGAFAFVLGLGI). At 272-276 (TTTCD) the chain is on the lumenal side. Residues 277–297 (VPVDMLLLFEGIPYLVLTVGF) form a helical membrane-spanning segment. Over 298–348 (EKPIQLTRAVLCVSEELRGGWQRPVPNGASSDDSRQSQLIPNIIQLAVDRE) the chain is Cytoplasmic. The helical transmembrane segment at 349–369 (GWYIVRSYLLEIGALALGAVL) threads the bilayer. At 370–377 (RPNDSLGH) the chain is on the lumenal side. Asn372 carries N-linked (GlcNAc...) asparagine glycosylation. Residues 378–398 (FCFLAAWTLLIDAILLFTFYA) traverse the membrane as a helical segment. Topologically, residues 399–439 (TILCVKLEITRIRSPGGLGQVNAKHPSGIFGHKVKSTNITW) are cytoplasmic. The helical transmembrane segment at 440–460 (WKLLTVGGFVLCHFLQLSPFF) threads the bilayer. At 461 to 542 (YRVMGEYMAN…LDGLESPLGR (82 aa)) the chain is on the lumenal side. Residues Asn470 and Asn520 are each glycosylated (N-linked (GlcNAc...) asparagine). The chain crosses the membrane as a helical span at residues 543 to 563 (LCLMGALVVSLVLNNHLIHAA). Topologically, residues 564–1048 (RWHAWPQARE…NRSAGATVKK (485 aa)) are cytoplasmic. The active-site Charge relay system is the Glu729. 735-741 (SASRGCK) lines the CoA pocket. Residues 796 to 798 (SRF) and 823 to 831 (DAMGMNMIS) contribute to the NADP(+) site. The active-site Charge relay system is the Lys863. CoA is bound at residue 892-894 (VLK). Asp939 acts as the Charge relay system in catalysis. Residue 1034–1035 (AH) coordinates CoA. His1035 acts as the Proton donor in catalysis. 1039–1040 (NR) is an NADP(+) binding site.

The protein belongs to the HMG-CoA reductase family.

The protein resides in the endoplasmic reticulum membrane. The catalysed reaction is (R)-mevalonate + 2 NADP(+) + CoA = (3S)-3-hydroxy-3-methylglutaryl-CoA + 2 NADPH + 2 H(+). It participates in metabolic intermediate biosynthesis; (R)-mevalonate biosynthesis; (R)-mevalonate from acetyl-CoA: step 3/3. Its function is as follows. HMG-CoA reductase; part of the first module of ergosterol biosynthesis pathway that includes the early steps of the pathway, conserved across all eukaryotes, and which results in the formation of mevalonate from acetyl-coenzyme A (acetyl-CoA). In this module, the cytosolic acetyl-CoA acetyltransferase catalyzes the formation of acetoacetyl-CoA. The hydroxymethylglutaryl-CoA synthase then condenses acetyl-CoA with acetoacetyl-CoA to form HMG-CoA. The rate-limiting step of the early module is the reduction to mevalonate by the 3-hydroxy-3-methylglutaryl-coenzyme A (HMG-CoA) reductase. In Aspergillus terreus (strain NIH 2624 / FGSC A1156), this protein is 3-hydroxy-3-methylglutaryl-coenzyme A reductase.